The primary structure comprises 263 residues: Endonuclease 8 (263 aa).

Catalysis depends on Pro-2, which acts as the Schiff-base intermediate with DNA. The active-site Proton donor is the Glu-3. Lys-53 acts as the Proton donor; for beta-elimination activity in catalysis. 3 residues coordinate DNA: Gln-70, Arg-125, and Asn-169. An FPG-type zinc finger spans residues 229-263 (KVFHRDGEACERCGGIIEKTTLSSRPFYWCPHCQK). Arg-253 acts as the Proton donor; for delta-elimination activity in catalysis.

It belongs to the FPG family. Zn(2+) is required as a cofactor.

It catalyses the reaction 2'-deoxyribonucleotide-(2'-deoxyribose 5'-phosphate)-2'-deoxyribonucleotide-DNA = a 3'-end 2'-deoxyribonucleotide-(2,3-dehydro-2,3-deoxyribose 5'-phosphate)-DNA + a 5'-end 5'-phospho-2'-deoxyribonucleoside-DNA + H(+). Involved in base excision repair of DNA damaged by oxidation or by mutagenic agents. Acts as a DNA glycosylase that recognizes and removes damaged bases. Has a preference for oxidized pyrimidines, such as thymine glycol, 5,6-dihydrouracil and 5,6-dihydrothymine. Has AP (apurinic/apyrimidinic) lyase activity and introduces nicks in the DNA strand. Cleaves the DNA backbone by beta-delta elimination to generate a single-strand break at the site of the removed base with both 3'- and 5'-phosphates. The sequence is that of Endonuclease 8 from Salmonella arizonae (strain ATCC BAA-731 / CDC346-86 / RSK2980).